The chain runs to 296 residues: Protein-export membrane protein SecF (296 aa).

The next 6 helical transmembrane spans lie at 23–43 (MIIY…ANYV), 144–164 (AIVY…RVPV), 169–189 (VVFS…IFGI), 194–214 (ATIA…ILLT), 236–256 (GFTM…FSTA), and 265–285 (VLIF…AGVL).

It belongs to the SecD/SecF family. SecF subfamily. As to quaternary structure, part of the protein translocation apparatus. Forms a complex with SecD.

The protein localises to the cell membrane. Functionally, involved in protein export. This Pyrococcus furiosus (strain ATCC 43587 / DSM 3638 / JCM 8422 / Vc1) protein is Protein-export membrane protein SecF.